The primary structure comprises 512 residues: 2,3-bisphosphoglycerate-independent phosphoglycerate mutase (512 aa).

2 residues coordinate Mn(2+): D14 and S64. S64 functions as the Phosphoserine intermediate in the catalytic mechanism. Residues H125, 155–156, R187, R193, 259–262, and K332 contribute to the substrate site; these read RD and RADR. D399, H403, D440, H441, and H459 together coordinate Mn(2+).

This sequence belongs to the BPG-independent phosphoglycerate mutase family. As to quaternary structure, monomer. It depends on Mn(2+) as a cofactor.

It carries out the reaction (2R)-2-phosphoglycerate = (2R)-3-phosphoglycerate. It functions in the pathway carbohydrate degradation; glycolysis; pyruvate from D-glyceraldehyde 3-phosphate: step 3/5. Its function is as follows. Catalyzes the interconversion of 2-phosphoglycerate and 3-phosphoglycerate. The polypeptide is 2,3-bisphosphoglycerate-independent phosphoglycerate mutase (Ruthia magnifica subsp. Calyptogena magnifica).